The following is a 442-amino-acid chain: UDP-N-acetylglucosamine--peptide N-acetylglucosaminyltransferase stabilizing protein GtfB (442 aa).

This sequence belongs to the GtfB family. As to quaternary structure, interacts with glycosyltransferase GtfA (Gtf1). Interacts with glycosyltransferase GtfA; probably forms a heterotetramer with 2 subunits each of GtfA and GtfB. Part of the accessory SecA2/SecY2 protein translocation apparatus.

It is found in the cell membrane. It functions in the pathway protein modification; protein glycosylation. Its function is as follows. Required for the polymorphic O-glycosylation of the serine-rich repeat protein Srr2. A stabilizing protein that is part of the accessory SecA2/SecY2 system specifically required to export serine-rich repeat proteins, probably Srr2 in this organism. The GtfA-GtfB (Gtf1-Gtf2 in this bacteria) complex adds GlcNAc from UDP-GlcNAc to Srr2 substrate, attaching the first sugar residue. Stabilizes the glycosylation activity of GtfA in vivo. Upon expression in a gtfB deletion mutant of S.parasanguis, GtfB confers incorrect glycosylation and partial complementation of a biofilm formation defect, while GtfA/GtfB restores correct expression of serine-rich repeat protein Fap1 and completely restores a biofilm formation defect in a S.parasanguis double gtfA-gtfB deletion. The polypeptide is UDP-N-acetylglucosamine--peptide N-acetylglucosaminyltransferase stabilizing protein GtfB (Streptococcus agalactiae).